The sequence spans 233 residues: Small ribosomal subunit protein uS3 (233 aa).

Residues 39–107 enclose the KH type-2 domain; it reads VRKYLTKELE…PAQINIAEVR (69 aa).

It belongs to the universal ribosomal protein uS3 family. In terms of assembly, part of the 30S ribosomal subunit. Forms a tight complex with proteins S10 and S14.

Binds the lower part of the 30S subunit head. Binds mRNA in the 70S ribosome, positioning it for translation. The polypeptide is Small ribosomal subunit protein uS3 (Pectobacterium carotovorum subsp. carotovorum (strain PC1)).